The following is a 463-amino-acid chain: tRNA (guanine(37)-N(1))-methyltransferase (463 aa).

S-adenosyl-L-methionine contacts are provided by residues His207, 245-246 (DL), 274-275 (DG), and Asn305.

Belongs to the class I-like SAM-binding methyltransferase superfamily. TRM5/TYW2 family. Monomer.

The protein resides in the mitochondrion matrix. It is found in the nucleus. The protein localises to the cytoplasm. The catalysed reaction is guanosine(37) in tRNA + S-adenosyl-L-methionine = N(1)-methylguanosine(37) in tRNA + S-adenosyl-L-homocysteine + H(+). Specifically methylates the N1 position of guanosine-37 in various cytoplasmic and mitochondrial tRNAs. Methylation is not dependent on the nature of the nucleoside 5' of the target nucleoside. This is the first step in the biosynthesis of wybutosine (yW), a modified base adjacent to the anticodon of tRNAs and required for accurate decoding. This chain is tRNA (guanine(37)-N(1))-methyltransferase, found in Pediculus humanus subsp. corporis (Body louse).